The primary structure comprises 540 residues: NXPE family member 1 (540 aa).

An N-terminal signal peptide occupies residues Met1 to Ser22. Residues Asn24, Asn42, Asn87, Asn155, Asn205, and Asn291 are each glycosylated (N-linked (GlcNAc...) asparagine).

This sequence belongs to the NXPE family. In terms of tissue distribution, intestine, and to a lesser extent in kidney.

The protein resides in the secreted. This Oryctolagus cuniculus (Rabbit) protein is NXPE family member 1 (NXPE1).